We begin with the raw amino-acid sequence, 255 residues long: Acetylglutamate kinase (255 aa).

Substrate-binding positions include 40 to 41 (GG), R62, and N153.

The protein belongs to the acetylglutamate kinase family. ArgB subfamily.

It localises to the cytoplasm. It catalyses the reaction N-acetyl-L-glutamate + ATP = N-acetyl-L-glutamyl 5-phosphate + ADP. Its pathway is amino-acid biosynthesis; L-arginine biosynthesis; N(2)-acetyl-L-ornithine from L-glutamate: step 2/4. Functionally, catalyzes the ATP-dependent phosphorylation of N-acetyl-L-glutamate. This Bacillus anthracis (strain CDC 684 / NRRL 3495) protein is Acetylglutamate kinase.